A 375-amino-acid chain; its full sequence is tRNA-specific 2-thiouridylase MnmA (375 aa).

Residues 17–24 (GMSGGVDS) and M43 contribute to the ATP site. Residues 103–105 (NPD) form an interaction with target base in tRNA region. C108 (nucleophile) is an active-site residue. The cysteines at positions 108 and 204 are disulfide-linked. G132 is an ATP binding site. The interval 154 to 156 (KDQ) is interaction with tRNA. Catalysis depends on C204, which acts as the Cysteine persulfide intermediate. Residues 316 to 317 (RY) are interaction with tRNA.

Belongs to the MnmA/TRMU family.

The protein localises to the cytoplasm. The enzyme catalyses S-sulfanyl-L-cysteinyl-[protein] + uridine(34) in tRNA + AH2 + ATP = 2-thiouridine(34) in tRNA + L-cysteinyl-[protein] + A + AMP + diphosphate + H(+). In terms of biological role, catalyzes the 2-thiolation of uridine at the wobble position (U34) of tRNA, leading to the formation of s(2)U34. The sequence is that of tRNA-specific 2-thiouridylase MnmA from Stutzerimonas stutzeri (strain A1501) (Pseudomonas stutzeri).